The primary structure comprises 404 residues: Chorismate synthase (404 aa).

2 residues coordinate NADP(+): Arg40 and Arg46. FMN-binding positions include 136–138 (RAS), 257–258 (QA), Gly301, 316–320 (KPIST), and Arg342.

This sequence belongs to the chorismate synthase family. In terms of assembly, homotetramer. It depends on FMNH2 as a cofactor.

The catalysed reaction is 5-O-(1-carboxyvinyl)-3-phosphoshikimate = chorismate + phosphate. The protein operates within metabolic intermediate biosynthesis; chorismate biosynthesis; chorismate from D-erythrose 4-phosphate and phosphoenolpyruvate: step 7/7. Catalyzes the anti-1,4-elimination of the C-3 phosphate and the C-6 proR hydrogen from 5-enolpyruvylshikimate-3-phosphate (EPSP) to yield chorismate, which is the branch point compound that serves as the starting substrate for the three terminal pathways of aromatic amino acid biosynthesis. This reaction introduces a second double bond into the aromatic ring system. This Mycolicibacterium vanbaalenii (strain DSM 7251 / JCM 13017 / BCRC 16820 / KCTC 9966 / NRRL B-24157 / PYR-1) (Mycobacterium vanbaalenii) protein is Chorismate synthase.